A 151-amino-acid polypeptide reads, in one-letter code: Large ribosomal subunit protein uL15 (151 aa).

Over residues 1–14 the composition is skewed to basic residues; sequence MRREKKSRAYRGSR. The interval 1–33 is disordered; the sequence is MRREKKSRAYRGSRTHGWGRVGQHRKSGSRGGR.

The protein belongs to the universal ribosomal protein uL15 family. In terms of assembly, part of the 50S ribosomal subunit.

Its function is as follows. Binds to the 23S rRNA. The protein is Large ribosomal subunit protein uL15 of Thermofilum pendens (strain DSM 2475 / Hrk 5).